The primary structure comprises 185 residues: Probable NEDD8-conjugating enzyme Ubc12-like (185 aa).

The interval 8-29 (KEKQREESQSNNGRGASTVKKQ) is disordered. Residues 16-28 (QSNNGRGASTVKK) are compositionally biased toward polar residues. The region spanning 31-176 (AGELRLHKDI…VRRAMMGGQV (146 aa)) is the UBC core domain. Cys114 functions as the Glycyl thioester intermediate in the catalytic mechanism.

It belongs to the ubiquitin-conjugating enzyme family. UBC12 subfamily.

The protein operates within protein modification; protein neddylation. Its function is as follows. Accepts the ubiquitin-like protein NEDD8/RUB1 from the ECR1-AXR1 E1 complex and catalyzes its covalent attachment to other proteins. This Arabidopsis thaliana (Mouse-ear cress) protein is Probable NEDD8-conjugating enzyme Ubc12-like (RCE2).